A 494-amino-acid chain; its full sequence is MKYNDLRDFLTLLEQQGELKRITLPVDPHLEITEIADRTLRAGGPALLFENPKGYSMPVLCNLFGTPKRVAMGMGQEDVSALREVGKLLAFLKEPEPPKGFRDLFDKLPQFKQVLNMPTKRLRGAPCQQKIVSGDDVDLNRIPIMTCWPEDAAPLITWGLTVTRGPHKERQNLGIYRQQLIGKNKLIMRWLSHRGGALDYQEWCAAHPGERFPVSVALGADPATILGAVTPVPDTLSEYAFAGLLRGTKTEVVKCISNDLEVPASAEIVLEGYIDPDEMAPEGPYGDHTGYYNEVDSFPVFTVTHITQREDAIYHSTYTGRPPDEPAVLGVALNEVFVPILQKQFPEIVDFYLPPEGCSYRLAVVTIKKQYAGHAKRVMMGVWSFLRQFMYTKFVIVCDDDVNARDWNDVIWAITTRMDPARDTVLVENTPIDYLDFASPVSGLGSKMGLDATNKWPGETQREWGRPIKKDPDVVAHIDAIWDELAIFNNGKSA.

Residue N172 coordinates Mn(2+). Prenylated FMN contacts are provided by residues I175–R177, R189–L191, and R194–G195. Position 238 (E238) interacts with Mn(2+). D287 serves as the catalytic Proton donor.

The protein belongs to the UbiD family. In terms of assembly, homohexamer. The cofactor is prenylated FMN. Mn(2+) serves as cofactor.

Its subcellular location is the cell membrane. The catalysed reaction is a 4-hydroxy-3-(all-trans-polyprenyl)benzoate + H(+) = a 2-(all-trans-polyprenyl)phenol + CO2. The protein operates within cofactor biosynthesis; ubiquinone biosynthesis. Its function is as follows. Catalyzes the decarboxylation of 3-octaprenyl-4-hydroxy benzoate to 2-octaprenylphenol, an intermediate step in ubiquinone biosynthesis. This chain is 3-octaprenyl-4-hydroxybenzoate carboxy-lyase, found in Shigella flexneri serotype 5b (strain 8401).